Here is a 704-residue protein sequence, read N- to C-terminus: Pentatricopeptide repeat-containing protein At1g56690, mitochondrial (704 aa).

The N-terminal 12 residues, 1 to 12, are a transit peptide targeting the mitochondrion; the sequence is MKRLKLILRRTY. 15 PPR repeats span residues 16–46, 47–81, 82–108, 109–143, 144–170, 171–205, 206–232, 233–267, 268–294, 295–329, 330–364, 365–395, 396–430, 431–465, and 467–497; these read TGVN…LQFK, AIGS…NVVS, WNGL…MPER, NVVS…NEVS, WTVM…MPVK, DVVA…NVVT, WTTM…MPEK, TEVS…PVIA, CNAM…MEDR, DNAT…GVRP, SFPS…QFDD, DVYV…FSSK, DIIM…GTMP, NKVT…FCVT, and TVEH…MTIK. The tract at residues 502–577 is type E motif; it reads VWGALLGACK…FPGCSWIEVG (76 aa). The type E(+) motif stretch occupies residues 578–609; it reads KKVHMFTRGGIKNHPEQAMILMMLEKTDGLLR. Residues 610–704 are type DYW motif; the sequence is EAGYSPDCSH…NGECSCRDYW (95 aa).

Belongs to the PPR family. PCMP-H subfamily.

It is found in the mitochondrion. The polypeptide is Pentatricopeptide repeat-containing protein At1g56690, mitochondrial (PCMP-H69) (Arabidopsis thaliana (Mouse-ear cress)).